The primary structure comprises 760 residues: Phosphatidylinositol N-acetylglucosaminyltransferase subunit Q (760 aa).

Transmembrane regions (helical) follow at residues 278–298 (TVAS…WLHG), 349–371 (LYHI…HILW), 378–400 (CLGL…FHIY), 446–468 (LFIG…LYYL), and 475–497 (LLVV…LPLY). The tract at residues 696–748 (LAVGVEGPCQDEPPSPRHPLAPSAEQHPASGGLKQSLTPVPSGPGPSLPEPHG) is disordered.

It belongs to the PIGQ family. In terms of assembly, component of the glycosylphosphatidylinositol-N-acetylglucosaminyltransferase (GPI-GnT) complex composed at least by PIGA, PIGC, PIGH, PIGP, PIGQ, PIGY and DPM2. Interacts with PIGA, PIGH and PIGC.

It is found in the membrane. It participates in glycolipid biosynthesis; glycosylphosphatidylinositol-anchor biosynthesis. Functionally, part of the glycosylphosphatidylinositol-N-acetylglucosaminyltransferase (GPI-GnT) complex that catalyzes the transfer of N-acetylglucosamine from UDP-N-acetylglucosamine to phosphatidylinositol and participates in the first step of GPI biosynthesis. In Homo sapiens (Human), this protein is Phosphatidylinositol N-acetylglucosaminyltransferase subunit Q.